The chain runs to 184 residues: Protein PLANT CADMIUM RESISTANCE 5 (184 aa).

Over residues 1–26 (MGRPVGQTNQAQPSVQHTASPSNKVS) the composition is skewed to polar residues. Positions 1–33 (MGRPVGQTNQAQPSVQHTASPSNKVSHNGGIGK) are disordered. Residues 94-114 (AGLLYGALFFTGASFVYSYMF) traverse the membrane as a helical segment.

Belongs to the cornifelin family.

The protein resides in the membrane. May be involved in heavy metals transport. In Arabidopsis thaliana (Mouse-ear cress), this protein is Protein PLANT CADMIUM RESISTANCE 5 (PCR5).